The following is a 289-amino-acid chain: MWRRCLRLRDVGRRLLNLPRSGLTASEGLGPKLPTPIRAYVPPAERKRFYQNVSISQGEGGFEINLDHRKLRTPQGKLFTVPSEALAIAVATEWDSQQDTIKMYTMHLTTLCNTSLDNPTQRDKDQLIRAAVKFLDTDTVCYRVEEPETLVELQRNEWDPVISWAEKRYGVEIGSSTSITGPSIPARTREVLVSHLASYNMWALQGIEFVVTQLKSLVLTLGLTDLRLTVEQAVLLSRLEEEYQIQKWGNIEWAHDYELQELRARTAAGTLFVHLCSESTAVKHKLLQG.

The N-terminal 40 residues, 1-40 (MWRRCLRLRDVGRRLLNLPRSGLTASEGLGPKLPTPIRAY), are a transit peptide targeting the mitochondrion. An N6-succinyllysine modification is found at Lys133.

Belongs to the ATP12 family. Interacts with ATP5F1B; involved in the assembly of the F1 component of the mitochondrial ATP synthase (ATPase). Interacts with FMC1.

The protein resides in the mitochondrion inner membrane. Plays a role in the assembly of the F1 component of the mitochondrial ATP synthase (ATPase). In Bos taurus (Bovine), this protein is ATP synthase mitochondrial F1 complex assembly factor 2 (ATPAF2).